Consider the following 230-residue polypeptide: Orotidine 5'-phosphate decarboxylase (230 aa).

Substrate contacts are provided by residues Asp10, Lys31, 58–67 (DLKLHDIPNT), Thr117, Arg179, Gln188, Gly208, and Arg209. The Proton donor role is filled by Lys60.

It belongs to the OMP decarboxylase family. Type 1 subfamily. In terms of assembly, homodimer.

The enzyme catalyses orotidine 5'-phosphate + H(+) = UMP + CO2. Its pathway is pyrimidine metabolism; UMP biosynthesis via de novo pathway; UMP from orotate: step 2/2. Functionally, catalyzes the decarboxylation of orotidine 5'-monophosphate (OMP) to uridine 5'-monophosphate (UMP). This is Orotidine 5'-phosphate decarboxylase from Staphylococcus aureus (strain USA300).